Consider the following 360-residue polypeptide: Type 2 DNA topoisomerase 6 subunit A (360 aa).

Positions 3–140 constitute a Topo IIA-type catalytic domain; sequence EIERRCLRAL…FHIRPEEDGA (138 aa). Residue Tyr-97 is the O-(5'-phospho-DNA)-tyrosine intermediate of the active site. Residues Glu-193 and Asp-245 each coordinate Mg(2+).

The protein belongs to the TOP6A family. As to quaternary structure, homodimer. Heterotetramer of two Top6A and two Top6B chains. Requires Mg(2+) as cofactor.

It carries out the reaction ATP-dependent breakage, passage and rejoining of double-stranded DNA.. Relaxes both positive and negative superturns and exhibits a strong decatenase activity. This chain is Type 2 DNA topoisomerase 6 subunit A, found in Archaeoglobus fulgidus (strain ATCC 49558 / DSM 4304 / JCM 9628 / NBRC 100126 / VC-16).